Consider the following 396-residue polypeptide: Polygalacturonase (396 aa).

Positions 1 to 22 are cleaved as a signal peptide; sequence MDLKFKVHFALVLLFLAHFGES. 6 N-linked (GlcNAc...) asparagine glycosylation sites follow: Asn-143, Asn-151, Asn-174, Asn-181, Asn-203, and Asn-208. PbH1 repeat units lie at residues 172-198 and 199-220; these read CKNL…HVSR and SSSV…SVGD. Asp-213 functions as the Proton donor in the catalytic mechanism. Cys-215 and Cys-232 form a disulfide bridge. The active site involves His-236. PbH1 repeat units lie at residues 252-273, 282-303, and 316-356; these read VVGV…RIKT, VNDV…VIDQ, and PSQV…EVGD. N-linked (GlcNAc...) asparagine glycans are attached at residues Asn-259 and Asn-294. A disordered region spans residues 364-396; sequence KEGPAKSSCENIKPSLKGKQNPPVCTASAASSS. A disulfide bridge links Cys-372 with Cys-388.

Belongs to the glycosyl hydrolase 28 family. In terms of tissue distribution, pollen.

The protein localises to the secreted. The protein resides in the cell wall. The catalysed reaction is (1,4-alpha-D-galacturonosyl)n+m + H2O = (1,4-alpha-D-galacturonosyl)n + (1,4-alpha-D-galacturonosyl)m.. May function in depolymerizing pectin during pollen development, germination, and tube growth. The chain is Polygalacturonase (PG1) from Nicotiana tabacum (Common tobacco).